Consider the following 338-residue polypeptide: 1-aminocyclopropane-1-carboxylate deaminase (338 aa).

Residue Lys-51 is modified to N6-(pyridoxal phosphate)lysine. Ser-78 functions as the Nucleophile in the catalytic mechanism.

Belongs to the ACC deaminase/D-cysteine desulfhydrase family. Homotrimer. The cofactor is pyridoxal 5'-phosphate.

The catalysed reaction is 1-aminocyclopropane-1-carboxylate + H2O = 2-oxobutanoate + NH4(+). In terms of biological role, catalyzes a cyclopropane ring-opening reaction, the irreversible conversion of 1-aminocyclopropane-1-carboxylate (ACC) to ammonia and alpha-ketobutyrate. Allows growth on ACC as a nitrogen source. This chain is 1-aminocyclopropane-1-carboxylate deaminase, found in Pseudomonas putida (Arthrobacter siderocapsulatus).